The chain runs to 579 residues: Viral transcription factor IE2 (579 aa).

Residues 1–11 show a composition bias toward basic and acidic residues; it reads MESSAKRKMDP. Disordered stretches follow at residues 1–30 and 99–161; these read MESSAKRKMDPDNPDEGPSSKVPRPETPVT and DSSS…VIIK. Residues 99–133 show a composition bias toward polar residues; the sequence is DSSSTGPTLTTHSCSVSSAPLNKPTPTSVAVTNTP. Residues Lys-175 and Lys-180 each participate in a glycyl lysine isopeptide (Lys-Gly) (interchain with G-Cter in SUMO) cross-link. Residues 199-202 carry the SUMO-interacting motif 1/SIM1 motif; that stretch reads CIVI. Residues 200–208 form a non-covalent SUMO1 binding region (SIM) region; the sequence is IVISDSEEE. Residues Ser-203 and Ser-205 each carry the phosphoserine modification. The segment at 206-335 is disordered; the sequence is EEEQGEEVET…SKRISELDNE (130 aa). Low complexity-rich tracts occupy residues 216 to 236, 259 to 270, and 301 to 316; these read RGATASSPSTGSGTPRVTSPT, SSSSSSCSSASD, and AASSSLLSCGHQSSGG. Positions 409–412 match the SUMO-interacting motif 1/SIM2 motif; the sequence is IQII. Positions 500 to 503 match the SUMO-interacting motif 1/SIM3 motif; that stretch reads VDLL.

Belongs to the HHV-5 IE2 protein family. Interacts with host SUMO-modified form of TATA-binding protein (TBP)-associated factor 12/TAF12 in a SIM-dependent manner; this interaction increases the transactivation activity of IE2. Interacts with host CHAF1A. Interacts with several components of the host transcriptional machinery including TBP, TF2B and CREB1. Interacts with host DNA replication licensing factor MCM3. Interacts with host PLSCR1; this interaction inhibits IE2 transactivating activity. Phosphorylated by host CK2 at Ser-203 and Ser-205; leading to enhanced SUMOylation. Post-translationally, SUMOylated; SUMOylation is enhanced when IE2 is phosphorylated by host CK2. The sumoylation is necessary for efficient replication of the virus and thus for the function of this viral transcription factor.

It is found in the host nucleus. In terms of biological role, stimulates viral early and late gene expression and thus play a crucial role in the regulation of productive infection. Selectively drives host RNA Pol II transcription initiation at a subset of viral early-late and late promoters without substantially affecting Pol II transcription of expressed host genes. Mechanistically, forms a repressive complex at the major immediate-early promoter region involving direct association with host nucleosomes and TBP. Concerning activation, stimulates transcription by binding nearby, but not within, core promoter regions. In addition, activates quiescent cells to reenter the cell cycle and up-regulates several E2F-responsive genes, which are responsible for pushing the cell into S phase. In S-phase, inhibits cellular DNA synthesis and blocks further cell cycle progression. The chain is Viral transcription factor IE2 (UL122) from Homo sapiens (Human).